Reading from the N-terminus, the 349-residue chain is Nuclear distribution protein nudE homolog 1-B (349 aa).

A coiled-coil region spans residues 22–189 (VAMKYKQCSE…ELAVQQKQEK (168 aa)).

The protein belongs to the nudE family. As to quaternary structure, self-associates. Interacts with pafah1b1. Post-translationally, phosphorylated in mitosis.

The protein localises to the cytoplasm. It localises to the cytoskeleton. The protein resides in the microtubule organizing center. Its subcellular location is the centrosome. It is found in the spindle. The protein localises to the chromosome. It localises to the centromere. The protein resides in the kinetochore. Its subcellular location is the cleavage furrow. It is found in the cytoplasmic vesicle membrane. Functionally, required for centrosome duplication and formation and function of the mitotic spindle. The sequence is that of Nuclear distribution protein nudE homolog 1-B (nde1-b) from Xenopus laevis (African clawed frog).